A 188-amino-acid polypeptide reads, in one-letter code: MSRIGKLAIKLGDKTKAVIAGEQVNFEGPKGKLSVKLPGKVKVEIKDGQMTVQREDDSREARSLHGLTRTILANAAKGVSTGFEKKLDIRGVGFRAEVKGKAIHFSLGFSHPVVFNLPEGVTAEVDKAPRNEDSLPTVGLTLRSSDKEALGATAVNIRSLRPPEPYKGKGIKYAEERIRRKEGKTGTT.

Belongs to the universal ribosomal protein uL6 family. As to quaternary structure, part of the 50S ribosomal subunit.

This protein binds to the 23S rRNA, and is important in its secondary structure. It is located near the subunit interface in the base of the L7/L12 stalk, and near the tRNA binding site of the peptidyltransferase center. The sequence is that of Large ribosomal subunit protein uL6 from Myxococcus xanthus (strain DK1622).